The primary structure comprises 293 residues: Phosphoribosylaminoimidazole-succinocarboxamide synthase (293 aa).

This sequence belongs to the SAICAR synthetase family.

The enzyme catalyses 5-amino-1-(5-phospho-D-ribosyl)imidazole-4-carboxylate + L-aspartate + ATP = (2S)-2-[5-amino-1-(5-phospho-beta-D-ribosyl)imidazole-4-carboxamido]succinate + ADP + phosphate + 2 H(+). It participates in purine metabolism; IMP biosynthesis via de novo pathway; 5-amino-1-(5-phospho-D-ribosyl)imidazole-4-carboxamide from 5-amino-1-(5-phospho-D-ribosyl)imidazole-4-carboxylate: step 1/2. This chain is Phosphoribosylaminoimidazole-succinocarboxamide synthase, found in Bordetella petrii (strain ATCC BAA-461 / DSM 12804 / CCUG 43448).